The following is a 211-amino-acid chain: Probable nicotinate-nucleotide adenylyltransferase (211 aa).

The protein belongs to the NadD family.

It carries out the reaction nicotinate beta-D-ribonucleotide + ATP + H(+) = deamido-NAD(+) + diphosphate. It participates in cofactor biosynthesis; NAD(+) biosynthesis; deamido-NAD(+) from nicotinate D-ribonucleotide: step 1/1. In terms of biological role, catalyzes the reversible adenylation of nicotinate mononucleotide (NaMN) to nicotinic acid adenine dinucleotide (NaAD). This Thermoanaerobacter sp. (strain X514) protein is Probable nicotinate-nucleotide adenylyltransferase.